We begin with the raw amino-acid sequence, 285 residues long: Undecaprenyl-diphosphatase (285 aa).

Transmembrane regions (helical) follow at residues 40 to 60, 89 to 109, 137 to 157, 171 to 191, 209 to 229, 241 to 261, and 265 to 285; these read GPLI…VYFF, LFWW…AIKL, DLIA…DWLG, GLIV…RSGV, FSFL…VPEI, LIAG…LMNF, and ASML…LAFF.

This sequence belongs to the UppP family.

It localises to the cell inner membrane. It catalyses the reaction di-trans,octa-cis-undecaprenyl diphosphate + H2O = di-trans,octa-cis-undecaprenyl phosphate + phosphate + H(+). Functionally, catalyzes the dephosphorylation of undecaprenyl diphosphate (UPP). Confers resistance to bacitracin. The protein is Undecaprenyl-diphosphatase of Erythrobacter litoralis (strain HTCC2594).